Reading from the N-terminus, the 701-residue chain is Protein UL29/UL28 (701 aa).

Positions 1–33 are disordered; that stretch reads MSGRRKGCSAATASSSSSSPPSRLPPLPGHARR.

The protein belongs to the herpesviridae US22 family. As to quaternary structure, interacts with UL38 and host HDAC1; these interactions are necessary for the HDAC1 interaction with UL38. Interacts with host MTA2.

It localises to the virion. Its subcellular location is the host nucleus. The protein localises to the host cytoplasm. Its function is as follows. Contributes to activation of immediate-early gene expression. The sequence is that of Protein UL29/UL28 (UL29) from Homo sapiens (Human).